Here is a 496-residue protein sequence, read N- to C-terminus: Cytochrome P450 monooxygenase cle4 (496 aa).

Residues 12–34 (FFTSPFPLTVGILSISLSGVLWY) form a helical membrane-spanning segment. Cysteine 435 lines the heme pocket.

It belongs to the cytochrome P450 family. The cofactor is heme.

The protein localises to the membrane. Its pathway is secondary metabolite biosynthesis; terpenoid biosynthesis. In terms of biological role, cytochrome P450 monooxygenase; part of the cluster A that mediates the biosynthesis of chevalone E and its oxidized derivatives that possess a unique five-membered lactone ring and can synergistically enhance the cytotoxicity of doxorubicin (DOX) in breast cancer cells. Within the pathway, cle4 is involved in hydroxylation of the chavalone E scaffold at positions C-11 and C-12 and contributes with cle2 to the production of seven oxidation derivatives. The molecular scaffold is commonly biosynthesized by a series of enzymes including the non-reducing polyketide synthase (NR-PKS) cle1 that produces the alpha-pyrone triacetic acid lactone (TAL); The membrane-bound prenyltransferase cle5 that accepts TAL as its substrate to perform a C-3 geranylgeranylation reaction, in which the pathway-dedicated GGPS cle6 is required to provide GGPP, the other substrate of cle5; the FAD-dependent monooxygenase Cle3 that forms an (S)-epoxide ring at the terminal olefin of the geranylgeranyl group; and the terpene cyclase Cle7 that catalyzes the cyclization of the prenyl group that yields the pentacyclic pathway intermediate chevalone E. Chevalone E can derivatize into seven new oxidized analogs by the cytochrome P450 monooxygenases cle2 (acting at C-20) and cle4 (acting at C-11 and C-12). This Aspergillus versicolor protein is Cytochrome P450 monooxygenase cle4.